A 62-amino-acid polypeptide reads, in one-letter code: Large ribosomal subunit protein uL30 (62 aa).

It belongs to the universal ribosomal protein uL30 family. As to quaternary structure, part of the 50S ribosomal subunit.

This is Large ribosomal subunit protein uL30 from Beutenbergia cavernae (strain ATCC BAA-8 / DSM 12333 / CCUG 43141 / JCM 11478 / NBRC 16432 / NCIMB 13614 / HKI 0122).